The primary structure comprises 1155 residues: DNA-directed RNA polymerase subunit beta (1155 aa).

The protein belongs to the RNA polymerase beta chain family. The RNAP catalytic core consists of 2 alpha, 1 beta, 1 beta' and 1 omega subunit. When a sigma factor is associated with the core the holoenzyme is formed, which can initiate transcription.

It catalyses the reaction RNA(n) + a ribonucleoside 5'-triphosphate = RNA(n+1) + diphosphate. In terms of biological role, DNA-dependent RNA polymerase catalyzes the transcription of DNA into RNA using the four ribonucleoside triphosphates as substrates. The polypeptide is DNA-directed RNA polymerase subunit beta (Borreliella burgdorferi (strain ZS7) (Borrelia burgdorferi)).